Reading from the N-terminus, the 575-residue chain is Transport inhibitor response 1-like protein Os04g0395600 (575 aa).

The 45-residue stretch at 1–45 (MTYFPEEVVEHIFSFLPAQRDRNTVSLVCKVWYEIERLSRRGVFV) folds into the F-box domain. Residue lysine 69 participates in 1D-myo-inositol hexakisphosphate binding. Positions 76–77 (DF) are interaction with auxin-responsive proteins. Residues 108–109 (KR) and arginine 340 contribute to the 1D-myo-inositol hexakisphosphate site. The segment at 343-348 (PSDFYV) is interaction with auxin-responsive proteins. Position 396–398 (396–398 (RFR)) interacts with 1D-myo-inositol hexakisphosphate. The interaction with auxin-responsive proteins stretch occupies residues 400-404 (CILEP). Residue arginine 431 coordinates 1D-myo-inositol hexakisphosphate. Positions 459–460 (AF) are interaction with auxin-responsive proteins. 1D-myo-inositol hexakisphosphate contacts are provided by residues 479-480 (RK) and arginine 504.

As to quaternary structure, part of a SCF (SKP1-cullin-F-box) protein ligase complex. May interact with auxin and auxin-responsive proteins.

The protein resides in the nucleus. The protein operates within protein modification; protein ubiquitination. The protein is Transport inhibitor response 1-like protein Os04g0395600 of Oryza sativa subsp. japonica (Rice).